The primary structure comprises 120 residues: Protein RALF-like 1 (120 aa).

Residues 1-26 (MDKSFTLFLTLTILVVFIISSPPVQA) form the signal peptide. A propeptide spans 27-71 (GFANDLGGVAWATTGDNGSGCHGSIAECIGAEEEEMDSEINRRIL) (removed in mature form). Asn43 carries an N-linked (GlcNAc...) asparagine glycan. Disulfide bonds link Cys89-Cys99 and Cys112-Cys118.

Belongs to the plant rapid alkalinization factor (RALF) family. Interacts with FER and promotes its phosphorylation and subsequent activation. In terms of processing, proteolytically cleaved, probably by S1P, a subtilisin-like serine protease (subtilase). As to expression, expressed in roots and stems.

The protein resides in the secreted. Its function is as follows. Cell signaling peptide that may regulate plant stress, growth, and development. Mediates a rapid alkalinization of extracellular space by mediating a transient increase in the cytoplasmic Ca(2+) concentration leading to a calcium-dependent signaling events through a cell surface receptor and a concomitant activation of some intracellular mitogen-activated protein kinases. Mostly active in roots. Prevents plant growth (e.g. root and leaf length). Suppresses cell elongation of the primary root by activating the cell surface receptor FER and triggering phosphorylation of AHA2 and subsequent extracellular alkalinization. This is Protein RALF-like 1 (RALF1) from Arabidopsis thaliana (Mouse-ear cress).